Consider the following 120-residue polypeptide: Glycine cleavage system H protein (120 aa).

The region spanning 17 to 99 is the Lipoyl-binding domain; sequence VATVGITAHA…QGAGWLYRLK (83 aa). Position 58 is an N6-lipoyllysine (K58).

The protein belongs to the GcvH family. As to quaternary structure, the glycine cleavage system is composed of four proteins: P, T, L and H. (R)-lipoate is required as a cofactor.

Its function is as follows. The glycine cleavage system catalyzes the degradation of glycine. The H protein shuttles the methylamine group of glycine from the P protein to the T protein. The polypeptide is Glycine cleavage system H protein (Methylorubrum populi (strain ATCC BAA-705 / NCIMB 13946 / BJ001) (Methylobacterium populi)).